The following is a 123-amino-acid chain: Small ribosomal subunit protein uS12 (123 aa).

3-methylthioaspartic acid is present on Asp89.

Belongs to the universal ribosomal protein uS12 family. In terms of assembly, part of the 30S ribosomal subunit. Contacts proteins S8 and S17. May interact with IF1 in the 30S initiation complex.

Functionally, with S4 and S5 plays an important role in translational accuracy. Interacts with and stabilizes bases of the 16S rRNA that are involved in tRNA selection in the A site and with the mRNA backbone. Located at the interface of the 30S and 50S subunits, it traverses the body of the 30S subunit contacting proteins on the other side and probably holding the rRNA structure together. The combined cluster of proteins S8, S12 and S17 appears to hold together the shoulder and platform of the 30S subunit. This is Small ribosomal subunit protein uS12 from Methylorubrum extorquens (strain PA1) (Methylobacterium extorquens).